A 71-amino-acid polypeptide reads, in one-letter code: MKADELRKLDDQQLRAKLKECYEELFNLRFQQVMGKLTATGRPRVVRRDIARIKTILRERELGIEVQETGR.

Belongs to the universal ribosomal protein uL29 family.

In Roseiflexus sp. (strain RS-1), this protein is Large ribosomal subunit protein uL29.